A 90-amino-acid chain; its full sequence is U7-theraphotoxin-Hhn1j (90 aa).

The first 19 residues, 1–19 (MKTAIFTVVLALAVFAVLS), serve as a signal peptide directing secretion. Residues 20–50 (FGWEANEKALSEEFTELIHEKEAASETEARE) constitute a propeptide that is removed on maturation. 3 disulfides stabilise this stretch: Cys-51/Cys-65, Cys-58/Cys-70, and Cys-64/Cys-81.

The protein belongs to the neurotoxin 10 (Hwtx-1) family. 13 (Hntx-13) subfamily. In terms of tissue distribution, expressed by the venom gland.

The protein resides in the secreted. Its function is as follows. Ion channel inhibitor. The polypeptide is U7-theraphotoxin-Hhn1j (Cyriopagopus hainanus (Chinese bird spider)).